We begin with the raw amino-acid sequence, 578 residues long: Lipoprotein A (578 aa).

A signal peptide spans 1 to 27 (MNKKYFKKYSWVLILSTSILAPMTLAS). Cys28 carries the N-palmitoyl cysteine lipid modification. Cys28 carries S-diacylglycerol cysteine lipidation. Disordered regions lie at residues 35–135 (KEDK…NTSA) and 172–203 (AKDD…EVKD). Residues 41–50 (NDSSNLSNKT) are compositionally biased toward polar residues. Residues 51–74 (NKSDPNDHLKDKDKNVSQDNKDST) are compositionally biased toward basic and acidic residues. A compositionally biased stretch (polar residues) spans 75 to 96 (NKAVSNENSQTQSQKTNESSQN). Low complexity predominate over residues 108-119 (ITNQNSSSNTKS). Basic and acidic residues predominate over residues 172 to 181 (AKDDSKEKSK).

It belongs to the M.pulmonis LipAB lipoprotein family.

The protein resides in the cell membrane. This is Lipoprotein A (lipA) from Mycoplasmopsis pulmonis (strain UAB CTIP) (Mycoplasma pulmonis).